We begin with the raw amino-acid sequence, 142 residues long: Nucleoside diphosphate kinase (142 aa).

ATP-binding residues include K11, F59, R87, T93, R104, and N114. H117 functions as the Pros-phosphohistidine intermediate in the catalytic mechanism.

Belongs to the NDK family. In terms of assembly, homotetramer. Mg(2+) serves as cofactor.

It localises to the cytoplasm. It catalyses the reaction a 2'-deoxyribonucleoside 5'-diphosphate + ATP = a 2'-deoxyribonucleoside 5'-triphosphate + ADP. It carries out the reaction a ribonucleoside 5'-diphosphate + ATP = a ribonucleoside 5'-triphosphate + ADP. Its function is as follows. Major role in the synthesis of nucleoside triphosphates other than ATP. The ATP gamma phosphate is transferred to the NDP beta phosphate via a ping-pong mechanism, using a phosphorylated active-site intermediate. This is Nucleoside diphosphate kinase from Aeromonas salmonicida (strain A449).